We begin with the raw amino-acid sequence, 125 residues long: Large ribosomal subunit protein bL12 (125 aa).

The protein belongs to the bacterial ribosomal protein bL12 family. Homodimer. Part of the ribosomal stalk of the 50S ribosomal subunit. Forms a multimeric L10(L12)X complex, where L10 forms an elongated spine to which 2 to 4 L12 dimers bind in a sequential fashion. Binds GTP-bound translation factors.

Its function is as follows. Forms part of the ribosomal stalk which helps the ribosome interact with GTP-bound translation factors. Is thus essential for accurate translation. In Helicobacter pylori (strain ATCC 700392 / 26695) (Campylobacter pylori), this protein is Large ribosomal subunit protein bL12.